A 176-amino-acid chain; its full sequence is DNA repair RAD52-like protein 1, mitochondrial (176 aa).

Residues 1 to 37 constitute a mitochondrion transit peptide; that stretch reads MAGLGLRLKAAKWTLRSGSGAVSREWSSEMGKGVRRF.

It belongs to the RAD52 family. Interacts with WHY2. As to expression, expressed in root vascular tissue, tips of primary and secondary roots, young leaves, hydathodes, stomatal guard cells, cauline leaves, flower buds, stipules, carpels, pistils and anther filaments.

The protein localises to the mitochondrion. It localises to the nucleus. Plant-specific single-stranded DNA-binding protein required for efficient heterologous recombination-dependent DNA repair in nuclear and mitochondrial compartments. Forms large nucleo-protein complexes with WHY2 in mitochondria. Binds ssDNA with high affinity, but with little sequence specificity. Involved in double-stranded DNA break repair. Involved in the hydrolytic splicing pathway in mitochondrion. Facilitates the excision of two cis-spliced group II introns, NAD1 intron 2 and NAD2 intron 1. This is DNA repair RAD52-like protein 1, mitochondrial from Arabidopsis thaliana (Mouse-ear cress).